Consider the following 94-residue polypeptide: Small ribosomal subunit protein bS18 (94 aa).

The segment covering 1-12 has biased composition (low complexity); it reads MSEQNSRPQNSE. The disordered stretch occupies residues 1-29; sequence MSEQNSRPQNSERPQRSRRPQGGPRRRRK. Residues 16 to 29 are compositionally biased toward basic residues; it reads RSRRPQGGPRRRRK.

The protein belongs to the bacterial ribosomal protein bS18 family. Part of the 30S ribosomal subunit. Forms a tight heterodimer with protein bS6.

In terms of biological role, binds as a heterodimer with protein bS6 to the central domain of the 16S rRNA, where it helps stabilize the platform of the 30S subunit. This Leuconostoc citreum (strain KM20) protein is Small ribosomal subunit protein bS18.